The chain runs to 619 residues: ESX-2 secretion system protein EccA2 (619 aa).

373-380 (GPPGTGKT) contacts ATP.

Belongs to the CbxX/CfxQ family. As to quaternary structure, part of the ESX-2 / type VII secretion system (T7SS), which is composed of cytosolic and membrane components.

The protein localises to the cytoplasm. Its function is as follows. Part of an ESX-2 / type VII specialized secretion system (T7SS), which exports several proteins. May have ATPase activity and might provide energy for the export of ESX-2 substrates. The polypeptide is ESX-2 secretion system protein EccA2 (Mycobacterium bovis (strain ATCC BAA-935 / AF2122/97)).